A 933-amino-acid chain; its full sequence is Isoleucine--tRNA ligase (933 aa).

The 'HIGH' region motif lies at 57–67; sequence PYANGNIHVGH. Glu-554 is an L-isoleucyl-5'-AMP binding site. The 'KMSKS' region signature appears at 595-599; the sequence is KMSKS. Residue Lys-598 coordinates ATP.

The protein belongs to the class-I aminoacyl-tRNA synthetase family. IleS type 1 subfamily. Monomer.

It localises to the cytoplasm. It carries out the reaction tRNA(Ile) + L-isoleucine + ATP = L-isoleucyl-tRNA(Ile) + AMP + diphosphate. Catalyzes the attachment of isoleucine to tRNA(Ile). As IleRS can inadvertently accommodate and process structurally similar amino acids such as valine, to avoid such errors it has two additional distinct tRNA(Ile)-dependent editing activities. One activity is designated as 'pretransfer' editing and involves the hydrolysis of activated Val-AMP. The other activity is designated 'posttransfer' editing and involves deacylation of mischarged Val-tRNA(Ile). This is Isoleucine--tRNA ligase from Streptococcus pyogenes serotype M28 (strain MGAS6180).